A 158-amino-acid polypeptide reads, in one-letter code: NAD(P)H-quinone oxidoreductase subunit N (158 aa).

The protein belongs to the complex I NdhN subunit family. As to quaternary structure, NDH-1 can be composed of about 15 different subunits; different subcomplexes with different compositions have been identified which probably have different functions.

The protein resides in the cellular thylakoid membrane. It carries out the reaction a plastoquinone + NADH + (n+1) H(+)(in) = a plastoquinol + NAD(+) + n H(+)(out). The catalysed reaction is a plastoquinone + NADPH + (n+1) H(+)(in) = a plastoquinol + NADP(+) + n H(+)(out). Functionally, NDH-1 shuttles electrons from an unknown electron donor, via FMN and iron-sulfur (Fe-S) centers, to quinones in the respiratory and/or the photosynthetic chain. The immediate electron acceptor for the enzyme in this species is believed to be plastoquinone. Couples the redox reaction to proton translocation, and thus conserves the redox energy in a proton gradient. Cyanobacterial NDH-1 also plays a role in inorganic carbon-concentration. This is NAD(P)H-quinone oxidoreductase subunit N from Nostoc punctiforme (strain ATCC 29133 / PCC 73102).